Consider the following 466-residue polypeptide: 3-isopropylmalate dehydratase large subunit (466 aa).

[4Fe-4S] cluster-binding residues include cysteine 347, cysteine 407, and cysteine 410.

This sequence belongs to the aconitase/IPM isomerase family. LeuC type 1 subfamily. In terms of assembly, heterodimer of LeuC and LeuD. It depends on [4Fe-4S] cluster as a cofactor.

It carries out the reaction (2R,3S)-3-isopropylmalate = (2S)-2-isopropylmalate. The protein operates within amino-acid biosynthesis; L-leucine biosynthesis; L-leucine from 3-methyl-2-oxobutanoate: step 2/4. Functionally, catalyzes the isomerization between 2-isopropylmalate and 3-isopropylmalate, via the formation of 2-isopropylmaleate. This is 3-isopropylmalate dehydratase large subunit from Buchnera aphidicola subsp. Thelaxes suberi.